The sequence spans 229 residues: 2,3-bisphosphoglycerate-dependent phosphoglycerate mutase (229 aa).

Substrate is bound by residues 8–15 (RHGKSEWN), 21–22 (TG), Arg60, 87–90 (ERHY), Lys98, 114–115 (RR), and 183–184 (GN). The active-site Tele-phosphohistidine intermediate is the His9. Glu87 functions as the Proton donor/acceptor in the catalytic mechanism.

Belongs to the phosphoglycerate mutase family. BPG-dependent PGAM subfamily. As to quaternary structure, homodimer.

It carries out the reaction (2R)-2-phosphoglycerate = (2R)-3-phosphoglycerate. It participates in carbohydrate degradation; glycolysis; pyruvate from D-glyceraldehyde 3-phosphate: step 3/5. Catalyzes the interconversion of 2-phosphoglycerate and 3-phosphoglycerate. The polypeptide is 2,3-bisphosphoglycerate-dependent phosphoglycerate mutase (Nautilia profundicola (strain ATCC BAA-1463 / DSM 18972 / AmH)).